Consider the following 347-residue polypeptide: NADH-ubiquinone oxidoreductase chain 2 (347 aa).

9 consecutive transmembrane segments (helical) span residues I5 to I22, W26 to M45, F60 to L80, N150 to L170, I178 to P198, L200 to M220, S242 to P262, N274 to M294, and T324 to L344.

Belongs to the complex I subunit 2 family. In terms of assembly, core subunit of respiratory chain NADH dehydrogenase (Complex I) which is composed of 45 different subunits. Interacts with TMEM242.

It localises to the mitochondrion inner membrane. The enzyme catalyses a ubiquinone + NADH + 5 H(+)(in) = a ubiquinol + NAD(+) + 4 H(+)(out). Core subunit of the mitochondrial membrane respiratory chain NADH dehydrogenase (Complex I) which catalyzes electron transfer from NADH through the respiratory chain, using ubiquinone as an electron acceptor. Essential for the catalytic activity and assembly of complex I. This chain is NADH-ubiquinone oxidoreductase chain 2, found in Martes flavigula (Yellow-throated marten).